Reading from the N-terminus, the 491-residue chain is Aspartyl/glutamyl-tRNA(Asn/Gln) amidotransferase subunit B (491 aa).

The protein belongs to the GatB/GatE family. GatB subfamily. As to quaternary structure, heterotrimer of A, B and C subunits.

The enzyme catalyses L-glutamyl-tRNA(Gln) + L-glutamine + ATP + H2O = L-glutaminyl-tRNA(Gln) + L-glutamate + ADP + phosphate + H(+). The catalysed reaction is L-aspartyl-tRNA(Asn) + L-glutamine + ATP + H2O = L-asparaginyl-tRNA(Asn) + L-glutamate + ADP + phosphate + 2 H(+). In terms of biological role, allows the formation of correctly charged Asn-tRNA(Asn) or Gln-tRNA(Gln) through the transamidation of misacylated Asp-tRNA(Asn) or Glu-tRNA(Gln) in organisms which lack either or both of asparaginyl-tRNA or glutaminyl-tRNA synthetases. The reaction takes place in the presence of glutamine and ATP through an activated phospho-Asp-tRNA(Asn) or phospho-Glu-tRNA(Gln). This is Aspartyl/glutamyl-tRNA(Asn/Gln) amidotransferase subunit B from Paraburkholderia phytofirmans (strain DSM 17436 / LMG 22146 / PsJN) (Burkholderia phytofirmans).